A 315-amino-acid polypeptide reads, in one-letter code: MATDNTKRKAAIIGSGNIGTDLMIKIMRRSRHLDVAAMVGIDPASDGLARAAKLGVATTHEGVQGLTRLSVFDEIDFVFDATSAGAHVKNDAFLRTLKPGIRVIDLTPAAIGPYCVPVVNLDAHLDAPNVNMVTCGGQATIPMVAAVSRVAKVHYAEIVASISSRSAGPGTRANIDEFTETTSKAIEAVGGAGKGKAIIVLNPAEPPLMMRDTVYVLSEAADRAQIEASVERMAAAVQAYVPGYRLKQSVQFDDIPANAPLHIPGLGRFSGLKTSVFIEVEGAAHYLPAYAGNLDIMTSAALATAERMAASLVNA.

15–18 is a binding site for NAD(+); that stretch reads SGNI. Cys135 functions as the Acyl-thioester intermediate in the catalytic mechanism. NAD(+) contacts are provided by residues 166–174 and Asn293; that span reads SAGPGTRAN.

The protein belongs to the acetaldehyde dehydrogenase family.

It carries out the reaction acetaldehyde + NAD(+) + CoA = acetyl-CoA + NADH + H(+). The chain is Acetaldehyde dehydrogenase 2 from Paraburkholderia phymatum (strain DSM 17167 / CIP 108236 / LMG 21445 / STM815) (Burkholderia phymatum).